A 349-amino-acid chain; its full sequence is MADVINISRIPIFSKQEREFSDLQKGKEINEKILNKESDRFTLYPILYPDVWDFYKKAEASFWTAEEIDLSSDLKDFEKLNENEKHFIKHVLAFFAASDGIVLENLASKFLREVQITEAKKFYSFQIAVENIHSETYSLLIDNYIKDEKERLNLFHAIENIPAVKNKALWAAKWINDTNSFAERIVANACVEGILFSGSFCAIFWFKKQNKLHGLTFSNELISRDEGLHTDFNCLIYSLLDNKLPEQIIQNIVKEAVEVERSFICESLPCDLIGMNSRLMSQYIEFVADRLLECLGCSKIFHSKNPFNWMDLISLQGKTNFFEKRVADYQKSGVMAQRKDQVFCLNTEF.

Residues D99, E130, and H133 each coordinate Fe cation. Residue Y137 is part of the active site. Fe cation contacts are provided by E192, E226, and H229.

It belongs to the ribonucleoside diphosphate reductase small chain family. Heterodimer of a large and a small subunit. Fe cation is required as a cofactor.

The catalysed reaction is a 2'-deoxyribonucleoside 5'-diphosphate + [thioredoxin]-disulfide + H2O = a ribonucleoside 5'-diphosphate + [thioredoxin]-dithiol. Its function is as follows. Provides the precursors necessary for DNA synthesis. Catalyzes the biosynthesis of deoxyribonucleotides from the corresponding ribonucleotides. This chain is Ribonucleoside-diphosphate reductase small chain (RNR2), found in Plasmodium falciparum (isolate Dd2).